Reading from the N-terminus, the 310-residue chain is Porphobilinogen deaminase (310 aa).

Cys242 bears the S-(dipyrrolylmethanemethyl)cysteine mark.

It belongs to the HMBS family. In terms of assembly, monomer. Dipyrromethane is required as a cofactor.

The catalysed reaction is 4 porphobilinogen + H2O = hydroxymethylbilane + 4 NH4(+). It participates in porphyrin-containing compound metabolism; protoporphyrin-IX biosynthesis; coproporphyrinogen-III from 5-aminolevulinate: step 2/4. Functionally, tetrapolymerization of the monopyrrole PBG into the hydroxymethylbilane pre-uroporphyrinogen in several discrete steps. This Alcanivorax borkumensis (strain ATCC 700651 / DSM 11573 / NCIMB 13689 / SK2) protein is Porphobilinogen deaminase.